Reading from the N-terminus, the 111-residue chain is Large ribosomal subunit protein uL22 (111 aa).

This sequence belongs to the universal ribosomal protein uL22 family. Part of the 50S ribosomal subunit.

Functionally, this protein binds specifically to 23S rRNA; its binding is stimulated by other ribosomal proteins, e.g. L4, L17, and L20. It is important during the early stages of 50S assembly. It makes multiple contacts with different domains of the 23S rRNA in the assembled 50S subunit and ribosome. The globular domain of the protein is located near the polypeptide exit tunnel on the outside of the subunit, while an extended beta-hairpin is found that lines the wall of the exit tunnel in the center of the 70S ribosome. In Alkalilimnicola ehrlichii (strain ATCC BAA-1101 / DSM 17681 / MLHE-1), this protein is Large ribosomal subunit protein uL22.